We begin with the raw amino-acid sequence, 444 residues long: Phosphoglucosamine mutase (444 aa).

The active-site Phosphoserine intermediate is Ser102. Residues Ser102, Asp241, Asp243, and Asp245 each contribute to the Mg(2+) site. At Ser102 the chain carries Phosphoserine.

Belongs to the phosphohexose mutase family. It depends on Mg(2+) as a cofactor. Post-translationally, activated by phosphorylation.

The enzyme catalyses alpha-D-glucosamine 1-phosphate = D-glucosamine 6-phosphate. Its function is as follows. Catalyzes the conversion of glucosamine-6-phosphate to glucosamine-1-phosphate. This is Phosphoglucosamine mutase from Erwinia tasmaniensis (strain DSM 17950 / CFBP 7177 / CIP 109463 / NCPPB 4357 / Et1/99).